A 612-amino-acid polypeptide reads, in one-letter code: U-box domain-containing protein 11 (612 aa).

Residues 127–196 (DEVGEQVELA…LHFGEEEEKQ (70 aa)) adopt a coiled-coil conformation. One can recognise a U-box domain in the interval 240 to 314 (TIPVDFLCPV…SRWCAEHNIE (75 aa)). ARM repeat units lie at residues 363 to 402 (TDNR…NLSI), 404 to 443 (ENNK…SLSL), 445 to 484 (DENK…NLCI), 486 to 526 (HGNK…VLAN), and 528 to 567 (QDAK…SLCK).

It catalyses the reaction S-ubiquitinyl-[E2 ubiquitin-conjugating enzyme]-L-cysteine + [acceptor protein]-L-lysine = [E2 ubiquitin-conjugating enzyme]-L-cysteine + N(6)-ubiquitinyl-[acceptor protein]-L-lysine.. Its pathway is protein modification; protein ubiquitination. Functions as an E3 ubiquitin ligase. This chain is U-box domain-containing protein 11 (PUB11), found in Arabidopsis thaliana (Mouse-ear cress).